A 201-amino-acid chain; its full sequence is Putative Ras-related protein Rab-1C (201 aa).

GTP is bound by residues 15–23, 33–40, and 63–67; these read GDSGVGKSC, YTESYIST, and DTAGQ. The Effector region signature appears at 37 to 45; the sequence is YISTIGVDF. S76 bears the (Microbial infection) O-(2-cholinephosphoryl)serine mark. Residues 121–124 and 151–153 each bind GTP; these read NKSD and SAK. The disordered stretch occupies residues 174-201; sequence GPGAASGGERPNLKIDSTPVKPAGGGCC. S-geranylgeranyl cysteine attachment occurs at residues C200 and C201.

Belongs to the small GTPase superfamily. Rab family. In terms of processing, (Microbial infection) Phosphocholinated at Ser-76 by L.pneumophila AnkX, leading to displace GDP dissociation inhibitors (GDI). Both GDP-bound and GTP-bound forms can be phosphocholinated. Dephosphocholinated by L.pneumophila Lem3, restoring accessibility to L.pneumophila GTPase effector LepB. Post-translationally, (Microbial infection) Glycosylated by S.typhimurium protein Ssek3: arginine GlcNAcylation prevents GTPase activity, thereby disrupting vesicular protein transport from the endoplasmic reticulum (ER) to the Golgi compartment.

The protein resides in the membrane. It localises to the cytoplasm. It carries out the reaction GTP + H2O = GDP + phosphate + H(+). Protein transport. Probably involved in vesicular traffic. In Homo sapiens (Human), this protein is Putative Ras-related protein Rab-1C (RAB1C).